We begin with the raw amino-acid sequence, 331 residues long: MDNLGHRENGRQRPDQYKGLHTQWMMPQTQRHLKDHQSMNLLALMNDRDNAIRERDHALAEKKAAIAERDMAFTQRDAAMAERNAAVVERDNALAALELARTNGLNMNNGNGFPQGSLSGSKNIHHHDQLSHAQSSPLQLADSPYDHAREMHISEAYPISTAPGSAGKAKRPKKNSSQASPLKRPSGVLRKTKKPSGDWKNVGMSGCGDDSAHASVMKNEWKDQNLGLNQVAFDDSTMPAPACSCTGKLRQCYKWGNGGWQSSCCTMNISMYPLPVMPNKRHARMGGRKMSGGAFTKLLSRLAAEGHDLSTPVDLKDHWAKHGTNRYITIR.

Positions 43-101 (ALMNDRDNAIRERDHALAEKKAAIAERDMAFTQRDAAMAERNAAVVERDNALAALELAR) form a coiled coil. Residues 51 to 86 (AIRERDHALAEKKAAIAERDMAFTQRDAAMAERNAA) are alanine-zipper. A compositionally biased stretch (polar residues) spans 104 to 122 (GLNMNNGNGFPQGSLSGSK). Disordered stretches follow at residues 104 to 140 (GLNM…PLQL) and 156 to 205 (AYPI…VGMS).

It belongs to the BBR/BPC family. Homodimer. Heterodimer.

The protein resides in the nucleus. Functionally, transcriptional regulator that specifically binds to GA-rich elements (GAGA-repeats) present in regulatory sequences of genes involved in developmental processes. The chain is Barley B recombinant-like protein D from Oryza sativa subsp. japonica (Rice).